Here is a 155-residue protein sequence, read N- to C-terminus: V-type proton ATPase 16 kDa proteolipid subunit c (155 aa).

The Lumenal portion of the chain corresponds to 1–10 (MSEAKSGPEY). A helical transmembrane segment spans residues 11-33 (ASFFAVMGASAAMVFSALGAAYG). The Cytoplasmic segment spans residues 34-55 (TAKSGTGIAAMSVMRPEMIMKS). The chain crosses the membrane as a helical span at residues 56–76 (IIPVVMAGIIAIYGLVVAVLI). Residues 77–92 (ANSLNDGISLYRSFLQ) lie on the Lumenal side of the membrane. Residues 93-114 (LGAGLSVGLSGLAAGFAIGIVG) form a helical membrane-spanning segment. Over 115 to 131 (DAGVRGTAQQPRLFVGM) the chain is Cytoplasmic. Residues 132–152 (ILILIFAEVLGLYGLIVALIL) form a helical membrane-spanning segment. Over 153-155 (STK) the chain is Lumenal.

The protein belongs to the V-ATPase proteolipid subunit family. V-ATPase is a heteromultimeric enzyme made up of two complexes: the ATP-hydrolytic V1 complex and the proton translocation V0 complex. The V1 complex consists of three catalytic AB heterodimers that form a heterohexamer, three peripheral stalks each consisting of EG heterodimers, one central rotor including subunits D and F, and the regulatory subunits C and H. The proton translocation complex V0 consists of the proton transport subunit a, a ring of proteolipid subunits c9c'', rotary subunit d, subunits e and f, and the accessory subunits ATP6AP1/Ac45 and ATP6AP2/PRR. Interacts with the V0 complex V-ATPase subunit a4 ATP6V0A4. Interacts with LASS2. Interacts with RNF182; this interaction leads to ubiquitination and degradation via the proteasome pathway. Ubiquitinated by RNF182, leading to its degradation via the ubiquitin-proteasome pathway.

It is found in the cytoplasmic vesicle. The protein localises to the clathrin-coated vesicle membrane. Its subcellular location is the secretory vesicle. It localises to the synaptic vesicle membrane. Its function is as follows. Proton-conducting pore forming subunit of the V0 complex of vacuolar(H+)-ATPase (V-ATPase), a multisubunit enzyme composed of a peripheral complex (V1) that hydrolyzes ATP and a membrane integral complex (V0) that translocates protons. V-ATPase is responsible for acidifying and maintaining the pH of intracellular compartments and in some cell types, is targeted to the plasma membrane, where it is responsible for acidifying the extracellular environment. The protein is V-type proton ATPase 16 kDa proteolipid subunit c (ATP6V0C) of Ovis aries (Sheep).